Consider the following 267-residue polypeptide: 4-hydroxy-tetrahydrodipicolinate reductase (267 aa).

Residues 12-17 (GPRGRM), 100-102 (GTT), and 126-129 (APNF) each bind NAD(+). His156 serves as the catalytic Proton donor/acceptor. A (S)-2,3,4,5-tetrahydrodipicolinate-binding site is contributed by His157. Residue Lys160 is the Proton donor of the active site. 166-167 (GT) is a (S)-2,3,4,5-tetrahydrodipicolinate binding site.

It belongs to the DapB family.

The protein resides in the cytoplasm. The catalysed reaction is (S)-2,3,4,5-tetrahydrodipicolinate + NAD(+) + H2O = (2S,4S)-4-hydroxy-2,3,4,5-tetrahydrodipicolinate + NADH + H(+). It catalyses the reaction (S)-2,3,4,5-tetrahydrodipicolinate + NADP(+) + H2O = (2S,4S)-4-hydroxy-2,3,4,5-tetrahydrodipicolinate + NADPH + H(+). Its pathway is amino-acid biosynthesis; L-lysine biosynthesis via DAP pathway; (S)-tetrahydrodipicolinate from L-aspartate: step 4/4. Functionally, catalyzes the conversion of 4-hydroxy-tetrahydrodipicolinate (HTPA) to tetrahydrodipicolinate. The chain is 4-hydroxy-tetrahydrodipicolinate reductase from Bacillus subtilis (strain 168).